The following is a 646-amino-acid chain: ATP-dependent zinc metalloprotease FtsH (646 aa).

Residues 1-4 lie on the Cytoplasmic side of the membrane; sequence MTRS. Residues 5-25 form a helical membrane-spanning segment; sequence LLWQMVIVLGAILMVNYVLTT. At 26–120 the chain is on the periplasmic side; the sequence is LTPQTQEPVV…VRPESKPSPW (95 aa). A helical membrane pass occupies residues 121–141; sequence ATAMIYMLPWLLIVGVWWFVI. Over 142 to 646 the chain is Cytoplasmic; that stretch reads KGMRTRQGPG…GELAGGAVEG (505 aa). 216-223 lines the ATP pocket; sequence GPPGTGKT. Histidine 437 is a Zn(2+) binding site. The active site involves glutamate 438. Zn(2+) is bound by residues histidine 441 and aspartate 513.

The protein in the central section; belongs to the AAA ATPase family. It in the C-terminal section; belongs to the peptidase M41 family. Homohexamer. The cofactor is Zn(2+).

The protein resides in the cell inner membrane. In terms of biological role, acts as a processive, ATP-dependent zinc metallopeptidase for both cytoplasmic and membrane proteins. Plays a role in the quality control of integral membrane proteins. This chain is ATP-dependent zinc metalloprotease FtsH, found in Syntrophotalea carbinolica (strain DSM 2380 / NBRC 103641 / GraBd1) (Pelobacter carbinolicus).